The following is a 468-amino-acid chain: Secretogranin-3 (468 aa).

Positions 1-19 are cleaved as a signal peptide; the sequence is MGFLGTGTWILVLVLPIQA. The segment at 23-69 is disordered; it reads PGGSQDKSLHNRELSAERPLNEQIAEAEEDKIKKTYPPENKPGQSNY. Positions 29–42 are enriched in basic and acidic residues; sequence KSLHNRELSAERPL. S37 bears the Phosphoserine mark. O-linked (Xyl...) (chondroitin sulfate) serine glycosylation is present at S37. T216 and T231 each carry an O-linked (GalNAc...) threonine glycan. The interval 353–406 is disordered; that stretch reads KLFPAPSEKSHEETDSTKEEAAKMEKEYGSLKDSTKDDNSNPGGKTDEPKGKTE. Residue S359 is glycosylated (O-linked (GalNAc...) serine). Residues 360-406 are compositionally biased toward basic and acidic residues; that stretch reads EKSHEETDSTKEEAAKMEKEYGSLKDSTKDDNSNPGGKTDEPKGKTE. S362 carries the phosphoserine modification.

As to quaternary structure, interacts with CHGA. Interacts with secretogranin II/SCG2. Interacts (via C-terminus) with CPE. In terms of processing, O-glycosylated. As to expression, detected in urine (at protein level). Expressed in brain, heart, kidney, liver and skeletal muscle.

Its subcellular location is the cytoplasmic vesicle. The protein localises to the secretory vesicle. It is found in the secretory vesicle membrane. The protein resides in the secreted. In terms of biological role, member of the granin protein family that regulates the biogenesis of secretory granules. Acts as a sorting receptor for intragranular proteins including chromogranin A/CHGA. May also play a role in angiogenesis. Promotes endothelial proliferation, migration and tube formation through MEK/ERK signaling pathway. This chain is Secretogranin-3 (SCG3), found in Homo sapiens (Human).